Reading from the N-terminus, the 40-residue chain is Photosystem II reaction center protein J (40 aa).

A helical membrane pass occupies residues 8 to 28 (IPLWMIGTLAGILVISLIGIF).

This sequence belongs to the PsbJ family. As to quaternary structure, PSII is composed of 1 copy each of membrane proteins PsbA, PsbB, PsbC, PsbD, PsbE, PsbF, PsbH, PsbI, PsbJ, PsbK, PsbL, PsbM, PsbT, PsbX, PsbY, PsbZ, Psb30/Ycf12, at least 3 peripheral proteins of the oxygen-evolving complex and a large number of cofactors. It forms dimeric complexes.

It localises to the plastid membrane. One of the components of the core complex of photosystem II (PSII). PSII is a light-driven water:plastoquinone oxidoreductase that uses light energy to abstract electrons from H(2)O, generating O(2) and a proton gradient subsequently used for ATP formation. It consists of a core antenna complex that captures photons, and an electron transfer chain that converts photonic excitation into a charge separation. The protein is Photosystem II reaction center protein J of Cuscuta gronovii (Common dodder).